A 265-amino-acid chain; its full sequence is Mlc titration factor A (265 aa).

Zn(2+) is bound by residues His-111, His-148, His-152, and Glu-211.

This sequence belongs to the MtfA family. In terms of assembly, interacts with Mlc. Zn(2+) serves as cofactor.

Its subcellular location is the cytoplasm. Functionally, involved in the modulation of the activity of the glucose-phosphotransferase system (glucose-PTS). Interacts with the transcriptional repressor Mlc, preventing its interaction with DNA and leading to the modulation of expression of genes regulated by Mlc, including ptsG, which encodes the PTS system glucose-specific EIICB component. Shows zinc-dependent metallopeptidase activity. This Escherichia coli O8 (strain IAI1) protein is Mlc titration factor A.